A 152-amino-acid chain; its full sequence is 3-dehydroquinate dehydratase (152 aa).

Tyrosine 26 functions as the Proton acceptor in the catalytic mechanism. Substrate is bound by residues asparagine 77, histidine 83, and aspartate 90. Histidine 103 (proton donor) is an active-site residue. Substrate is bound by residues 104–105 and arginine 114; that span reads LS.

It belongs to the type-II 3-dehydroquinase family. As to quaternary structure, homododecamer.

It catalyses the reaction 3-dehydroquinate = 3-dehydroshikimate + H2O. Its pathway is metabolic intermediate biosynthesis; chorismate biosynthesis; chorismate from D-erythrose 4-phosphate and phosphoenolpyruvate: step 3/7. Its function is as follows. Catalyzes a trans-dehydration via an enolate intermediate. This chain is 3-dehydroquinate dehydratase (aroQ), found in Synechocystis sp. (strain ATCC 27184 / PCC 6803 / Kazusa).